The chain runs to 185 residues: Elongation factor P (185 aa).

It belongs to the elongation factor P family.

It localises to the cytoplasm. It participates in protein biosynthesis; polypeptide chain elongation. Functionally, involved in peptide bond synthesis. Stimulates efficient translation and peptide-bond synthesis on native or reconstituted 70S ribosomes in vitro. Probably functions indirectly by altering the affinity of the ribosome for aminoacyl-tRNA, thus increasing their reactivity as acceptors for peptidyl transferase. The polypeptide is Elongation factor P (Gloeothece citriformis (strain PCC 7424) (Cyanothece sp. (strain PCC 7424))).